The following is a 517-amino-acid chain: MTKNIHDQRILILDFGSQYTQLVARRVREIGVYCELWSWDVEEADIREFNPDGIILSGGPESVTEANSPRAPQYVFDSGVPVFGVCYGMQTMAEQLGGRVATSDEREFGYAQVKISGESALFKDLDLTQDVWMSHGDKVVEIPADFVKIGETDTCPYAAMANEEKKYYGVQFHPEVTHTKNGLQMLENFVLGVCGCERLWTSESIIEDAVARIKEQVGNDEVILGLSGGVDSSVVAMLVHRAIGSKLTCVFVDNGLLRLNEGEQVMEMFGDKFGLNIIKVDAEERFLKALEGIDEPEAKRKTIGRVFVEVFDEESKKLSNAKWLAQGTIYPDVIESAASKTGKAHVIKSHHNVGGLPDDMKMGLVEPLRELFKDEVRKIGLELGLPYNMLYRHPFPGPGLGVRVLGEVKKEYCDLLRRADAIFIEELHAADLYNKVSQAFTVFLPVRSVGVMGDGRKYDWVVSLRAVETIDFMTAHWAHLPYEFLGKVSNRIINEVNGISRVVYDISGKPPATIEWE.

Residues 9-199 (RILILDFGSQ…VLGVCGCERL (191 aa)) enclose the Glutamine amidotransferase type-1 domain. The Nucleophile role is filled by Cys86. Residues His173 and Glu175 contribute to the active site. In terms of domain architecture, GMPS ATP-PPase spans 200-392 (WTSESIIEDA…LGLPYNMLYR (193 aa)). Position 227–233 (227–233 (SGGVDSS)) interacts with ATP.

As to quaternary structure, homodimer.

It catalyses the reaction XMP + L-glutamine + ATP + H2O = GMP + L-glutamate + AMP + diphosphate + 2 H(+). It functions in the pathway purine metabolism; GMP biosynthesis; GMP from XMP (L-Gln route): step 1/1. In terms of biological role, catalyzes the synthesis of GMP from XMP. This chain is GMP synthase [glutamine-hydrolyzing], found in Vibrio cholerae serotype O1 (strain ATCC 39541 / Classical Ogawa 395 / O395).